A 510-amino-acid polypeptide reads, in one-letter code: Cobyric acid synthase (510 aa).

Residues 249-458 (CFKVRVLVYP…LHGLFDSPDA (210 aa)) enclose the GATase cobBQ-type domain. Cysteine 336 (nucleophile) is an active-site residue. Histidine 450 is an active-site residue.

It belongs to the CobB/CobQ family. CobQ subfamily.

Its pathway is cofactor biosynthesis; adenosylcobalamin biosynthesis. In terms of biological role, catalyzes amidations at positions B, D, E, and G on adenosylcobyrinic A,C-diamide. NH(2) groups are provided by glutamine, and one molecule of ATP is hydrogenolyzed for each amidation. This Shewanella oneidensis (strain ATCC 700550 / JCM 31522 / CIP 106686 / LMG 19005 / NCIMB 14063 / MR-1) protein is Cobyric acid synthase.